The chain runs to 101 residues: Ubiquitin-related modifier 1 (101 aa).

Gly101 carries the post-translational modification 1-thioglycine. A Glycyl lysine isopeptide (Gly-Lys) (interchain with K-? in acceptor proteins) cross-link involves residue Gly101.

This sequence belongs to the URM1 family. In terms of processing, C-terminal thiocarboxylation occurs in 2 steps, it is first acyl-adenylated (-COAMP) via the hesA/moeB/thiF part of UBA4, then thiocarboxylated (-COSH) via the rhodanese domain of UBA4.

The protein localises to the cytoplasm. The protein operates within tRNA modification; 5-methoxycarbonylmethyl-2-thiouridine-tRNA biosynthesis. Its function is as follows. Acts as a sulfur carrier required for 2-thiolation of mcm(5)S(2)U at tRNA wobble positions of cytosolic tRNA(Lys), tRNA(Glu) and tRNA(Gln). Serves as sulfur donor in tRNA 2-thiolation reaction by being thiocarboxylated (-COSH) at its C-terminus by the MOCS3 homolog UBA4. The sulfur is then transferred to tRNA to form 2-thiolation of mcm(5)S(2)U. Prior mcm(5) tRNA modification by the elongator complex is required for 2-thiolation. Also acts as a ubiquitin-like protein (UBL) that is covalently conjugated via an isopeptide bond to lysine residues of target proteins such as AHP1. The thiocarboxylated form serves as substrate for conjugation and oxidative stress specifically induces the formation of UBL-protein conjugates. The chain is Ubiquitin-related modifier 1 from Debaryomyces hansenii (strain ATCC 36239 / CBS 767 / BCRC 21394 / JCM 1990 / NBRC 0083 / IGC 2968) (Yeast).